A 275-amino-acid polypeptide reads, in one-letter code: MENSSTPITGLAWISSVTLCPKTYNMIVATVEGASANFVKGFNQKSAVYLGYSTVPEGLEQVITDIQMLNEKTVLPVGYAFIGEHLDPKISVPKKKRLCVKQMPMHTAETAVCEIKLSMKSKQFGAPYERIGEISGLVFWCRKGSVSAPKPTPKPRNITSGIKGLSLDSNTAVQPVRRASAPNPDAGQAVPLSNGKWGLSENAIYDSSNIYGISAIDGIPFTIHPMFENTINNSSVAASDFRDLHIKTLSEIESEYNYGFVVEKTAAARIPPRLR.

Positions 5–145 (STPITGLAWI…GLVFWCRKGS (141 aa)) constitute an MABP domain. The SH3-binding motif lies at 151–156 (PTPKPR). The UMA domain occupies 216–267 (IDGIPFTIHPMFENTINNSSVAASDFRDLHIKTLSEIESEYNYGFVVEKTAA).

Belongs to the MVB12 family. Component of the ESCRT-I complex (endosomal sorting complex required for transport I).

It is found in the cytoplasm. Its subcellular location is the endosome. It localises to the late endosome membrane. In terms of biological role, component of the ESCRT-I complex, a regulator of vesicular trafficking process. Required for the sorting of endocytic ubiquitinated cargos into multivesicular bodies. In Xenopus laevis (African clawed frog), this protein is Multivesicular body subunit 12A (mvb12a).